The chain runs to 296 residues: 4-hydroxybenzoate octaprenyltransferase (296 aa).

8 consecutive transmembrane segments (helical) span residues 28 to 48 (PIGI…AGKG), 52 to 72 (LANI…GCVI), 102 to 122 (ALVF…CTNA), 146 to 166 (YYPQ…AFTA), 169 to 189 (GELP…TVGY), 219 to 239 (VIIL…GSKF), 241 to 261 (LGMW…WEFW), and 275 to 295 (FLHN…DYAL).

This sequence belongs to the UbiA prenyltransferase family. The cofactor is Mg(2+).

The protein localises to the cell inner membrane. It catalyses the reaction all-trans-octaprenyl diphosphate + 4-hydroxybenzoate = 4-hydroxy-3-(all-trans-octaprenyl)benzoate + diphosphate. The protein operates within cofactor biosynthesis; ubiquinone biosynthesis. Catalyzes the prenylation of para-hydroxybenzoate (PHB) with an all-trans polyprenyl group. Mediates the second step in the final reaction sequence of ubiquinone-8 (UQ-8) biosynthesis, which is the condensation of the polyisoprenoid side chain with PHB, generating the first membrane-bound Q intermediate 3-octaprenyl-4-hydroxybenzoate. In Pseudomonas fluorescens (strain Pf0-1), this protein is 4-hydroxybenzoate octaprenyltransferase.